Reading from the N-terminus, the 212-residue chain is N-(5'-phosphoribosyl)anthranilate isomerase (212 aa).

Belongs to the TrpF family.

It carries out the reaction N-(5-phospho-beta-D-ribosyl)anthranilate = 1-(2-carboxyphenylamino)-1-deoxy-D-ribulose 5-phosphate. Its pathway is amino-acid biosynthesis; L-tryptophan biosynthesis; L-tryptophan from chorismate: step 3/5. This chain is N-(5'-phosphoribosyl)anthranilate isomerase, found in Cereibacter sphaeroides (strain ATCC 17029 / ATH 2.4.9) (Rhodobacter sphaeroides).